Consider the following 623-residue polypeptide: Quinoprotein ethanol dehydrogenase (623 aa).

Positions 1–34 are cleaved as a signal peptide; that stretch reads MTIRSLPAALSPLSMAVQAVLLVSSLALAPAANA. Ca(2+)-binding residues include D45 and N51. A pyrroloquinoline quinone-binding site is contributed by E95. A disulfide bridge links C139 with C140. Pyrroloquinoline quinone contacts are provided by residues R145, T189, and 207–209; that span reads HGS. E213 is a Ca(2+) binding site. Residues 242 to 279 are disordered; the sequence is GRLNGKDSTPTGDVKAPSWPDDPTTETGKVESWSHGGG. Ca(2+) contacts are provided by N300 and D350. The active-site Proton acceptor is the D350. R378 is a pyrroloquinoline quinone binding site. The tract at residues 414–436 is disordered; it reads RPVENEGQRPAKPLPGETKGKPV. WD repeat units lie at residues 515-556 and 559-601; these read EHNE…ELWK and TGSG…LTKP. Pyrroloquinoline quinone contacts are provided by W523 and A587.

It belongs to the bacterial PQQ dehydrogenase family. As to quaternary structure, homodimer. It depends on pyrroloquinoline quinone as a cofactor. Ca(2+) serves as cofactor.

It is found in the periplasm. It catalyses the reaction a primary alcohol + 2 Fe(III)-[cytochrome c] = an aldehyde + 2 Fe(II)-[cytochrome c] + 2 H(+). The enzyme catalyses ethanol + 2 Fe(III)-[cytochrome c] = acetaldehyde + 2 Fe(II)-[cytochrome c] + 2 H(+). The catalysed reaction is ethanol + A = acetaldehyde + AH2. It carries out the reaction 1-propanol + 2 Fe(III)-[cytochrome c] = propanal + 2 Fe(II)-[cytochrome c] + 2 H(+). It participates in alcohol metabolism; ethanol degradation; acetate from ethanol: step 1/2. Its activity is regulated as follows. Enhanced by the presence of ethylamine or NH4(+) ions. Its function is as follows. Catalyzes the oxidation of ethanol and other primary alcohols to the corresponding aldehydes, except methanol, which is not a substrate. Uses a specific inducible cytochrome c550, encoded by the adjacent gene in the locus, as electron acceptor. Is a key enzyme of the carbon and energy metabolism during growth of P.putida on ethanol as the sole carbon and energy source. Displays lower activity on secondary alcohols, aldehydes and diols. Is not active with sugar alcohols such as glycerol and D-sorbitol. In vitro, reacts well with phenazine methosulfate (PMS) as an electron acceptor but not with NAD(P), potassium ferricyanide, or molecular oxygen. The sequence is that of Quinoprotein ethanol dehydrogenase from Pseudomonas putida (Arthrobacter siderocapsulatus).